A 387-amino-acid polypeptide reads, in one-letter code: Putative 8-amino-7-oxononanoate synthase (387 aa).

Substrate is bound at residue R19. 107-108 (GY) serves as a coordination point for pyridoxal 5'-phosphate. A substrate-binding site is contributed by H132. Pyridoxal 5'-phosphate-binding positions include S180, 206 to 209 (DEAH), and 237 to 240 (TFGK). K240 bears the N6-(pyridoxal phosphate)lysine mark. T354 provides a ligand contact to substrate.

Belongs to the class-II pyridoxal-phosphate-dependent aminotransferase family. BioF subfamily. Homodimer. Requires pyridoxal 5'-phosphate as cofactor.

The enzyme catalyses 6-carboxyhexanoyl-[ACP] + L-alanine + H(+) = (8S)-8-amino-7-oxononanoate + holo-[ACP] + CO2. The protein operates within cofactor biosynthesis; biotin biosynthesis. Functionally, catalyzes the decarboxylative condensation of pimeloyl-[acyl-carrier protein] and L-alanine to produce 8-amino-7-oxononanoate (AON), [acyl-carrier protein], and carbon dioxide. This is Putative 8-amino-7-oxononanoate synthase (bioF) from Pasteurella multocida (strain Pm70).